The primary structure comprises 158 residues: SsrA-binding protein (158 aa).

Basic and acidic residues predominate over residues 133-152 (KRQTLREQQDNREAQREMRE). Residues 133–158 (KRQTLREQQDNREAQREMRERNRRRG) form a disordered region.

This sequence belongs to the SmpB family.

The protein resides in the cytoplasm. Required for rescue of stalled ribosomes mediated by trans-translation. Binds to transfer-messenger RNA (tmRNA), required for stable association of tmRNA with ribosomes. tmRNA and SmpB together mimic tRNA shape, replacing the anticodon stem-loop with SmpB. tmRNA is encoded by the ssrA gene; the 2 termini fold to resemble tRNA(Ala) and it encodes a 'tag peptide', a short internal open reading frame. During trans-translation Ala-aminoacylated tmRNA acts like a tRNA, entering the A-site of stalled ribosomes, displacing the stalled mRNA. The ribosome then switches to translate the ORF on the tmRNA; the nascent peptide is terminated with the 'tag peptide' encoded by the tmRNA and targeted for degradation. The ribosome is freed to recommence translation, which seems to be the essential function of trans-translation. This is SsrA-binding protein from Pseudarthrobacter chlorophenolicus (strain ATCC 700700 / DSM 12829 / CIP 107037 / JCM 12360 / KCTC 9906 / NCIMB 13794 / A6) (Arthrobacter chlorophenolicus).